We begin with the raw amino-acid sequence, 258 residues long: 3-deoxy-manno-octulosonate cytidylyltransferase (258 aa).

The protein belongs to the KdsB family.

It localises to the cytoplasm. The catalysed reaction is 3-deoxy-alpha-D-manno-oct-2-ulosonate + CTP = CMP-3-deoxy-beta-D-manno-octulosonate + diphosphate. It participates in nucleotide-sugar biosynthesis; CMP-3-deoxy-D-manno-octulosonate biosynthesis; CMP-3-deoxy-D-manno-octulosonate from 3-deoxy-D-manno-octulosonate and CTP: step 1/1. The protein operates within bacterial outer membrane biogenesis; lipopolysaccharide biosynthesis. Activates KDO (a required 8-carbon sugar) for incorporation into bacterial lipopolysaccharide in Gram-negative bacteria. In Nitrobacter hamburgensis (strain DSM 10229 / NCIMB 13809 / X14), this protein is 3-deoxy-manno-octulosonate cytidylyltransferase.